Here is a 245-residue protein sequence, read N- to C-terminus: MISVSGYRLRPEDIEKLNVSQTQRDIANRMLAMPSGYRYGSISELLFELRFREHTVKSARELINSGAKFATFSKTYGNEEFWRVTPEGALELKYRAPASKAIRNIFESGPSYAFECATAIVIIFYMALLKTIGDQTFDRNYQRIILYDWHYERLPIYTDKGNDYLPGDCLYFKNPEFDPSRPQWRGENAILLENNLYAAHGLGILSGETIIEKLNGLRKPHAQTSAYLLSQVTRVDIPALIQMIR.

Belongs to the bacillus TGase family.

It carries out the reaction L-glutaminyl-[protein] + L-lysyl-[protein] = [protein]-L-lysyl-N(6)-5-L-glutamyl-[protein] + NH4(+). Probably plays a role in the assembly of the spore coat proteins by catalyzing epsilon-(gamma-glutamyl)lysine cross-links. The sequence is that of Protein-glutamine gamma-glutamyltransferase from Bacillus licheniformis (strain ATCC 14580 / DSM 13 / JCM 2505 / CCUG 7422 / NBRC 12200 / NCIMB 9375 / NCTC 10341 / NRRL NRS-1264 / Gibson 46).